We begin with the raw amino-acid sequence, 116 residues long: Large ribosomal subunit protein bL19 (116 aa).

It belongs to the bacterial ribosomal protein bL19 family.

In terms of biological role, this protein is located at the 30S-50S ribosomal subunit interface and may play a role in the structure and function of the aminoacyl-tRNA binding site. In Pseudomonas putida (strain ATCC 700007 / DSM 6899 / JCM 31910 / BCRC 17059 / LMG 24140 / F1), this protein is Large ribosomal subunit protein bL19.